Reading from the N-terminus, the 348-residue chain is MIRISLDLMGGDFGPEVVIPGAAKALERHPDITFIMYGMKDRCEPILGKYAKLREKSVFHECDVSISMDEKPSQALRRGRYVSSMWRSIEAVKLGEADVVVSAGNTGALMAMAKFCLRTMANIERPAIAAIWPTLRGESIVLDVGATIGADSQQLLDFALMGGAMARALFEIERPTIGLLNVGVEEIKGQEDVKEAGRLIREANLESLEYSGFVEGDDIGKGTVDVVVTEGFSGNIALKAAEGTAKQIGAYLRSAMTRTLLARIGYLFAKGAFDLLREKLDPSKVNGGVFLGLNGIVIKSHGGASAEAFAAAIDVGYDMAKNGLTQKIENDLKRYHAKRQPPIGPEAA.

The protein belongs to the PlsX family. Homodimer. Probably interacts with PlsY.

Its subcellular location is the cytoplasm. The enzyme catalyses a fatty acyl-[ACP] + phosphate = an acyl phosphate + holo-[ACP]. It functions in the pathway lipid metabolism; phospholipid metabolism. Its function is as follows. Catalyzes the reversible formation of acyl-phosphate (acyl-PO(4)) from acyl-[acyl-carrier-protein] (acyl-ACP). This enzyme utilizes acyl-ACP as fatty acyl donor, but not acyl-CoA. This is Phosphate acyltransferase from Rhizobium rhizogenes (strain K84 / ATCC BAA-868) (Agrobacterium radiobacter).